The chain runs to 391 residues: Ectodysplasin-A (391 aa).

Topologically, residues M1–L41 are cytoplasmic. A helical; Signal-anchor for type II membrane protein membrane pass occupies residues L42–L62. The Extracellular segment spans residues E63–S391. Disordered stretches follow at residues G73–S127 and Y146–E245. Residues T86 to P101 show a composition bias toward low complexity. Positions I102–Q113 are enriched in polar residues. The Collagen-like domain occupies G180–P229. Pro residues-rich tracts occupy residues P181–P203 and P216–P228. The 137-residue stretch at A249–L385 folds into the THD domain. Residue N313 is glycosylated (N-linked (GlcNAc...) asparagine). C332 and C346 are oxidised to a cystine. N372 carries an N-linked (GlcNAc...) asparagine glycan.

This sequence belongs to the tumor necrosis factor family. In terms of assembly, homotrimer. The homotrimers may then dimerize and form higher-order oligomers. N-glycosylated. Post-translationally, processing by furin produces a secreted form. In terms of tissue distribution, not abundant; expressed in specific cell types of ectodermal (but not mesodermal) origin of keratinocytes, hair follicles, sweat glands. Also in adult heart, liver, muscle, pancreas, prostate, fetal liver, uterus, small intestine and umbilical cord.

It localises to the cell membrane. It is found in the secreted. In terms of biological role, cytokine which is involved in epithelial-mesenchymal signaling during morphogenesis of ectodermal organs. Functions as a ligand activating the DEATH-domain containing receptors EDAR and EDA2R. May also play a role in cell adhesion. Functionally, binds only to the receptor EDAR, while isoform 3 binds exclusively to the receptor EDA2R. Binds only to the receptor EDA2R. This is Ectodysplasin-A (EDA) from Homo sapiens (Human).